The chain runs to 221 residues: Arginine ABC transporter permease protein ArtQ (221 aa).

The region spanning 13 to 206 is the ABC transmembrane type-1 domain; sequence ALMTLGLAVC…AVTLISQVGI (194 aa). 5 helical membrane passes run 17-37, 49-69, 82-102, 121-141, and 186-206; these read LGLAVCSLLLGLFLSLIFAVL, VFVALLRGLPEIIVVLLVYFG, IEFGAFGCGVLALSLIFAAYA, GAALGLSKSYTFIHIVMPQVW, and TWYGIAALIYLAVTLISQVGI.

Belongs to the binding-protein-dependent transport system permease family. HisMQ subfamily. In terms of assembly, the complex is composed of two ATP-binding proteins (ArtP), two transmembrane proteins (ArtM and ArtQ) and a solute-binding protein (ArtI).

Its subcellular location is the cell inner membrane. Part of the ABC transporter complex ArtPIQM involved in arginine transport. Probably responsible for the translocation of the substrate across the membrane. This chain is Arginine ABC transporter permease protein ArtQ (artQ), found in Haemophilus influenzae (strain ATCC 51907 / DSM 11121 / KW20 / Rd).